The sequence spans 249 residues: Large ribosomal subunit protein uL22m (249 aa).

The transit peptide at 1–22 directs the protein to the mitochondrion; that stretch reads MKYINQFMKISKGFLVPSSTIG. The tract at residues 70 to 98 is disordered; sequence ANQKDDSNRQQKEERVKERPRSRISFKKQ. Basic and acidic residues predominate over residues 72-98; sequence QKDDSNRQQKEERVKERPRSRISFKKQ.

It belongs to the universal ribosomal protein uL22 family. Component of the mitochondrial large ribosomal subunit (mt-LSU). Mature yeast 74S mitochondrial ribosomes consist of a small (37S) and a large (54S) subunit. The 37S small subunit contains a 15S ribosomal RNA (15S mt-rRNA) and at least 32 different proteins. The 54S large subunit contains a 21S rRNA (21S mt-rRNA) and at least 45 different proteins. uL22m forms the wall of the exit tunnel.

Its subcellular location is the mitochondrion. Functionally, component of the mitochondrial ribosome (mitoribosome), a dedicated translation machinery responsible for the synthesis of mitochondrial genome-encoded proteins, including at least some of the essential transmembrane subunits of the mitochondrial respiratory chain. The mitoribosomes are attached to the mitochondrial inner membrane and translation products are cotranslationally integrated into the membrane. In Schizosaccharomyces pombe (strain 972 / ATCC 24843) (Fission yeast), this protein is Large ribosomal subunit protein uL22m (mrpl22).